We begin with the raw amino-acid sequence, 148 residues long: HTH-type transcriptional regulator Rv2324 (148 aa).

Positions 4 to 65 (LDDTDERILA…VVDRNALGWN (62 aa)) constitute an HTH asnC-type domain. Positions 23-42 (FAEIGHKVSLSAPAVKRRVD) form a DNA-binding region, H-T-H motif.

In terms of assembly, homodimer. Forms oligomers.

The DNA-binding activity of Rv2324 is modulated by interaction of Rv2324 with amino acids. Aspartate is the only effector amino acid that completely abolishes DNA binding. The majority of amino acids induce a dimer-tetramer or dimer-hexamer oligomeric transition. In response to amino-acid binding, adopts an open quaternary association, which is a part of the functional requirement to bind to non-symmetrically distributed target DNA binding sites. In terms of biological role, transcriptional regulator involved in growth, DNA replication and damage control. Plays a crucial role in regulating survival and growth of M.tuberculosis. Could function as a global regulator in both the latent/persistent and active phases of growth. Binds to its own promoter region and to promoters of multiple metabolic genes, such as serB2, lat, ald and roc operon. In vitro, interacts with intrinsically curved and non-curved DNA molecules, and with both supercoiled and linear DNA, with higher affinity for supercoiled DNA. Binds to DNA recombination, replication and repair intermediates. In Mycobacterium tuberculosis (strain ATCC 25618 / H37Rv), this protein is HTH-type transcriptional regulator Rv2324.